A 624-amino-acid chain; its full sequence is Kelch-like ECH-associated protein 1 (624 aa).

Positions 1–27 are disordered; it reads MQPEPRPSGAGAHTQFLPLRSQRPEGA. Position 38 is an S-(2-succinyl)cysteine (Cys38). A BTB domain is found at 77–149; that stretch reads CDVTLQVKYE…AYTASISMGE (73 aa). Residue Arg135 forms an N5-[4-(S-L-cysteinyl)-5-methyl-1H-imidazol-2-yl]-L-ornithine (Arg-Cys) (interchain with C-151 in KEAP1) linkage. 2 positions are modified to S-(2-succinyl)cysteine: Cys151 and Cys241. At Cys151 the chain carries S-(2,3-dicarboxypropyl)cysteine; alternate. An S-nitrosocysteine; alternate modification is found at Cys151. Cys151 is covalently cross-linked (N5-[4-(S-L-cysteinyl)-5-methyl-1H-imidazol-2-yl]-L-ornithine (Cys-Arg) (interchain with R-135 in KEAP1)). Residues 184–286 enclose the BACK domain; that stretch reads AIGIANFAEQ…TPHFLQMQLQ (103 aa). S-(2,3-dicarboxypropyl)cysteine occurs at positions 257 and 273. An S-(2-succinyl)cysteine mark is found at Cys288 and Cys319. Cys288 carries the S-(2,3-dicarboxypropyl)cysteine; alternate modification. 6 Kelch repeats span residues 327-372, 373-423, 424-470, 471-517, 519-564, and 565-611; these read LIYT…VVGG, LLYA…VIDG, HIYA…VLNR, LLYA…VLHN, IYAA…VHQG, and RIYV…VTME. Cys434 is modified (S-cGMP-cysteine). The residue at position 613 (Cys613) is an S-(2-succinyl)cysteine.

The protein belongs to the KEAP1 family. As to quaternary structure, component of the BCR(KEAP1) E3 ubiquitin ligase complex, at least composed of 2 molecules of CUL3, 2 molecules of KEAP1, and RBX1. Interacts with NFE2L2/NRF2; the interaction is direct. Forms a ternary complex with NFE2L2/NRF2 and PGAM5. Interacts with (phosphorylated) SQSTM1/p62; the interaction is direct and inactivates the BCR(KEAP1) complex by sequestering it in inclusion bodies, promoting its degradation. Interacts with NFE2L1. Interacts with BPTF and PTMA. Interacts with MAP1LC3B. Interacts indirectly with ENC1. Interacts with SESN1 and SESN2. Interacts with HSP90AA1 and HSP90AB1. Interacts with PGCKA1; this interaction prevents the ubiquitination of KEAP1 by TRIM25, thus protecting KEAP1 protein from degradation. Non-enzymatic covalent modifications of reactive cysteines by electrophile metabolites inactivate the BCR(KEAP1) complex. Accumulation of fumarate promotes the formation of cysteine S-succination (S-(2-succinyl)cysteine), leading to inactivate the BCR(KEAP1) complex and promote NFE2L2/NRF2 nuclear accumulation and activation. Nitric oxide-dependent 8-Nitro-cGMP formation promotes cysteine guanylation (S-cGMP-cysteine), leading to NFE2L2/NRF2 nuclear accumulation and activation. Itaconate, an anti-inflammatory metabolite generated in response to lipopolysaccharide, alkylates cysteines, activating NFE2L2/NRF2. Methylglyoxal, a reactive metabolite that accumulates when the glycolytic enzyme PGK1 is inhibited, promotes formation of a methylimidazole cross-link between proximal Cys-151 and Arg-135 on another KEAP1 molecule, resulting in an inactive dimer that inactivates the BCR(KEAP1) complex. In terms of processing, degraded via a proteasomal-independent process during selective autophagy: interaction with phosphorylated SQSTM1/p62 sequesters KEAP1 in inclusion bodies, leading to its degradation. Post-translationally, auto-ubiquitinated by the BCR(KEAP1) complex. Quinone-induced oxidative stress, but not sulforaphane, increases its ubiquitination. Ubiquitination and subsequent degradation is most pronounced following prolonged exposure of cells to oxidative stress, particularly in glutathione-deficient cells that are highly susceptible to oxidative stress. Deubiquitinated by USP25; leading to stabilization. Ubiquitinated by TRIM25; leading to degradation upon ER stress.

It is found in the cytoplasm. Its subcellular location is the nucleus. Its pathway is protein modification; protein ubiquitination. Ubiquitin ligase activity of the BCR(KEAP1) complex is inhibited by oxidative stress and electrophile metabolites such as sulforaphane. Electrophile metabolites react with reactive cysteine residues in KEAP1 and trigger non-enzymatic covalent modifications of these cysteine residues, leading to inactivate the ubiquitin ligase activity of the BCR(KEAP1) complex. Selective autophagy also inactivates the BCR(KEAP1) complex via interaction between KEAP1 and SQSTM1/p62, which sequesters the complex in inclusion bodies and promotes its degradation. In terms of biological role, substrate-specific adapter of a BCR (BTB-CUL3-RBX1) E3 ubiquitin ligase complex that regulates the response to oxidative stress by targeting NFE2L2/NRF2 for ubiquitination. KEAP1 acts as a key sensor of oxidative and electrophilic stress: in normal conditions, the BCR(KEAP1) complex mediates ubiquitination and degradation of NFE2L2/NRF2, a transcription factor regulating expression of many cytoprotective genes. In response to oxidative stress, different electrophile metabolites trigger non-enzymatic covalent modifications of highly reactive cysteine residues in KEAP1, leading to inactivate the ubiquitin ligase activity of the BCR(KEAP1) complex, promoting NFE2L2/NRF2 nuclear accumulation and expression of phase II detoxifying enzymes. In response to selective autophagy, KEAP1 is sequestered in inclusion bodies following its interaction with SQSTM1/p62, leading to inactivation of the BCR(KEAP1) complex and activation of NFE2L2/NRF2. The BCR(KEAP1) complex also mediates ubiquitination of SQSTM1/p62, increasing SQSTM1/p62 sequestering activity and degradation. The BCR(KEAP1) complex also targets BPTF and PGAM5 for ubiquitination and degradation by the proteasome. This chain is Kelch-like ECH-associated protein 1, found in Sus scrofa (Pig).